A 157-amino-acid chain; its full sequence is SsrA-binding protein (157 aa).

It belongs to the SmpB family.

It is found in the cytoplasm. In terms of biological role, required for rescue of stalled ribosomes mediated by trans-translation. Binds to transfer-messenger RNA (tmRNA), required for stable association of tmRNA with ribosomes. tmRNA and SmpB together mimic tRNA shape, replacing the anticodon stem-loop with SmpB. tmRNA is encoded by the ssrA gene; the 2 termini fold to resemble tRNA(Ala) and it encodes a 'tag peptide', a short internal open reading frame. During trans-translation Ala-aminoacylated tmRNA acts like a tRNA, entering the A-site of stalled ribosomes, displacing the stalled mRNA. The ribosome then switches to translate the ORF on the tmRNA; the nascent peptide is terminated with the 'tag peptide' encoded by the tmRNA and targeted for degradation. The ribosome is freed to recommence translation, which seems to be the essential function of trans-translation. This Rhodococcus jostii (strain RHA1) protein is SsrA-binding protein.